Here is a 619-residue protein sequence, read N- to C-terminus: CREB-regulated transcription coactivator 3 (619 aa).

Phosphoserine is present on residues Ser-4 and Ser-62. Residues 129–148 form a disordered region; sequence SQHLDESWPRQQPPWKEEKH. A Phosphothreonine modification is found at Thr-160. Position 162 is a phosphoserine; by SIK2 (Ser-162). A Glycyl lysine isopeptide (Lys-Gly) (interchain with G-Cter in SUMO2) cross-link involves residue Lys-232. A phosphoserine mark is found at Ser-273, Ser-329, Ser-332, Ser-370, Ser-391, Ser-396, and Ser-410. Residues 375 to 478 are disordered; it reads STTNLSGPSR…TQQPQAAPSL (104 aa). Residues 380 to 401 are required for interaction with PPP2CA and PPP2R1A; that stretch reads SGPSRRRQPPVSPLTLSPGPEA. Composition is skewed to polar residues over residues 405 to 415 and 422 to 431; these read FSRQLSATSPL and QMVTSEQSPL. Ser-443 carries the phosphoserine modification. The span at 443-454 shows a compositional bias: pro residues; that stretch reads SPPPPYPTPQEL. Over residues 455–478 the composition is skewed to low complexity; sequence PQPLLQQPHAQEPPTQQPQAAPSL.

It belongs to the TORC family. In terms of assembly, binding, as a tetramer, through its N-terminal region, with the bZIP domain of CREB1 enhances recruitment of TAF4 to the promoter. 'Arg-314' in the bZIP domain of CREB1 is essential for this interaction. Interacts (when phosphorylated at Ser-162 and Se-273) with 14-3-3 proteins. Interacts with YWHAE. Interacts (when phosphorylated at Ser-391) with phosphatase PP2A catalytic subunit PPP2CA and regulatory subunits PPP2R1A and PPP2R2A. Post-translationally, phosphorylation/dephosphorylation states of Ser-273 are required for regulating transduction of CREB activity. CRTCs/TORCs are inactive when phosphorylated, and active when dephosphorylated at this site. May be phosphorylated at Ser-391 by MAPK3/ERK1 and/or MAPK1/ERK2 or by some cyclin-dependent kinases such as CDK1,CDK2 or CDK5. Following adenylyl cyclase activation, dephosphorylated at Ser-162 and Ser-273 resulting in its dissociation from 14-3-3 proteins probably promoting CRTC3 translocation into the nucleus. In terms of tissue distribution, expressed in brown adipose tissues.

The protein resides in the nucleus. It localises to the cytoplasm. In terms of biological role, transcriptional coactivator for CREB1 which activates transcription through both consensus and variant cAMP response element (CRE) sites. Acts as a coactivator, in the SIK/TORC signaling pathway, being active when dephosphorylated. Acts independently of CREB1 'Ser-133' phosphorylation. Enhances the interaction of CREB1 with TAF4. Regulates the expression of specific CREB-activated genes such as the steroidogenic gene, StAR. Potent coactivator of PPARGC1A and inducer of mitochondrial biogenesis in muscle cells. This Mus musculus (Mouse) protein is CREB-regulated transcription coactivator 3 (Crtc3).